Consider the following 255-residue polypeptide: FMR1 neighbor protein (255 aa).

Residues 1–68 are Cytoplasmic-facing; that stretch reads MSSHRRKAKG…ESLKMRVSKP (68 aa). The chain crosses the membrane as a helical span at residues 69–89; sequence FGMLMLSIWILLFVCYYLSYY. The Extracellular portion of the chain corresponds to 90–183; that stretch reads LCSGSSYFVL…FAPFRDVPKQ (94 aa). The 60-residue stretch at 125–184 folds into the P-type domain; that stretch reads LLNFFFPTTCNLRENQVAKPCNELQDLSESECLRHKCCFSSSGTTSFKCFAPFRDVPKQM. A helical transmembrane segment spans residues 184-204; sequence MMQMFGLGAISLILVCLPIYC. Residues 205–255 lie on the Cytoplasmic side of the membrane; sequence RSLFWRSEPADDLQRQDNRVVTGLKKQRRKRKRKSEMLQKAARGREEHGDE. Residues 220–255 are disordered; that stretch reads QDNRVVTGLKKQRRKRKRKSEMLQKAARGREEHGDE. The span at 229–238 shows a compositional bias: basic residues; it reads KKQRRKRKRK.

Testis-specific. Expressed in melanoma, sarcoma, lung, breast, bladder, esophageal and ovarian cancers.

The protein resides in the membrane. This Homo sapiens (Human) protein is FMR1 neighbor protein.